Reading from the N-terminus, the 412-residue chain is Probable beta-1,4-xylosyltransferase IRX10 (412 aa).

The chain crosses the membrane as a helical; Signal-anchor for type II membrane protein span at residues 1-21 (MKIHSCLSAILLFLFFSASSA). Topologically, residues 22–412 (KQNVRTERIS…AGPVADLKPW (391 aa)) are lumenal. N-linked (GlcNAc...) asparagine glycans are attached at residues asparagine 139 and asparagine 400.

It belongs to the glycosyltransferase 47 family. Limited to xylem cells. Expressed in the root tip, xylem cells of roots, and in the vasculature of roots, cotyledons and leaves.

It is found in the golgi apparatus membrane. Functionally, involved in the synthesis of the hemicellulose glucuronoxylan, a major component of secondary cell walls. Probably involved in the elongation of glucuronoxylan xylosyl backbone, especially in the formation of GlcUA side chain of xylans. The chain is Probable beta-1,4-xylosyltransferase IRX10 (IRX10) from Arabidopsis thaliana (Mouse-ear cress).